We begin with the raw amino-acid sequence, 360 residues long: Protein Wnt-5b (360 aa).

Positions 1-16 are cleaved as a signal peptide; the sequence is MTPILRLLLLSSLLSC. The cysteines at positions 84 and 95 are disulfide-linked. N-linked (GlcNAc...) asparagine glycosylation is found at Asn94 and Asn100. Disulfide bonds link Cys134/Cys142, Cys144/Cys162, Cys218/Cys232, Cys220/Cys227, Cys289/Cys320, Cys305/Cys315, Cys319/Cys359, Cys335/Cys350, Cys337/Cys347, and Cys342/Cys343. Ser224 carries O-palmitoleoyl serine; by PORCN lipidation. Residues Asn292 and Asn306 are each glycosylated (N-linked (GlcNAc...) asparagine).

This sequence belongs to the Wnt family. In terms of processing, palmitoleoylation is required for efficient binding to frizzled receptors. Depalmitoleoylation leads to Wnt signaling pathway inhibition.

It localises to the secreted. The protein localises to the extracellular space. Its subcellular location is the extracellular matrix. Ligand for members of the frizzled family of seven transmembrane receptors. Probable developmental protein. May be a signaling molecule which affects the development of discrete regions of tissues. Is likely to signal over only few cell diameters. In Xenopus laevis (African clawed frog), this protein is Protein Wnt-5b (wnt5b).